The primary structure comprises 158 residues: NAD(P)H-quinone oxidoreductase subunit J, chloroplastic (158 aa).

The protein belongs to the complex I 30 kDa subunit family. NDH is composed of at least 16 different subunits, 5 of which are encoded in the nucleus.

The protein resides in the plastid. Its subcellular location is the chloroplast thylakoid membrane. It carries out the reaction a plastoquinone + NADH + (n+1) H(+)(in) = a plastoquinol + NAD(+) + n H(+)(out). The catalysed reaction is a plastoquinone + NADPH + (n+1) H(+)(in) = a plastoquinol + NADP(+) + n H(+)(out). Its function is as follows. NDH shuttles electrons from NAD(P)H:plastoquinone, via FMN and iron-sulfur (Fe-S) centers, to quinones in the photosynthetic chain and possibly in a chloroplast respiratory chain. The immediate electron acceptor for the enzyme in this species is believed to be plastoquinone. Couples the redox reaction to proton translocation, and thus conserves the redox energy in a proton gradient. The polypeptide is NAD(P)H-quinone oxidoreductase subunit J, chloroplastic (Daucus carota (Wild carrot)).